The following is a 205-amino-acid chain: Arginine exporter protein ArgO (205 aa).

Helical transmembrane passes span methionine 1–proline 21, leucine 42–leucine 62, leucine 67–alanine 87, isoleucine 111–valine 131, tryptophan 147–alanine 167, and leucine 185–leucine 205.

It belongs to the LysE/ArgO transporter (TC 2.A.75) family.

The protein resides in the cell inner membrane. It carries out the reaction L-arginine(in) = L-arginine(out). In terms of biological role, involved in the export of arginine. Important to control the intracellular level of arginine and the correct balance between arginine and lysine. The polypeptide is Arginine exporter protein ArgO (Yersinia pseudotuberculosis serotype O:3 (strain YPIII)).